The chain runs to 207 residues: N-(5'-phosphoribosyl)anthranilate isomerase (207 aa).

The protein belongs to the TrpF family.

It catalyses the reaction N-(5-phospho-beta-D-ribosyl)anthranilate = 1-(2-carboxyphenylamino)-1-deoxy-D-ribulose 5-phosphate. It participates in amino-acid biosynthesis; L-tryptophan biosynthesis; L-tryptophan from chorismate: step 3/5. The sequence is that of N-(5'-phosphoribosyl)anthranilate isomerase from Stutzerimonas stutzeri (strain A1501) (Pseudomonas stutzeri).